A 501-amino-acid chain; its full sequence is Glutamyl-tRNA(Gln) amidotransferase subunit A (501 aa).

Residues K80 and S155 each act as charge relay system in the active site. The active-site Acyl-ester intermediate is the S179.

The protein belongs to the amidase family. GatA subfamily. As to quaternary structure, heterotrimer of A, B and C subunits.

It catalyses the reaction L-glutamyl-tRNA(Gln) + L-glutamine + ATP + H2O = L-glutaminyl-tRNA(Gln) + L-glutamate + ADP + phosphate + H(+). Allows the formation of correctly charged Gln-tRNA(Gln) through the transamidation of misacylated Glu-tRNA(Gln) in organisms which lack glutaminyl-tRNA synthetase. The reaction takes place in the presence of glutamine and ATP through an activated gamma-phospho-Glu-tRNA(Gln). The protein is Glutamyl-tRNA(Gln) amidotransferase subunit A of Cutibacterium acnes (strain DSM 16379 / KPA171202) (Propionibacterium acnes).